We begin with the raw amino-acid sequence, 391 residues long: Pyruvate dehydrogenase E1 component subunit alpha, testis-specific form, mitochondrial (391 aa).

The transit peptide at 1–30 (MRKMLATVLSQVFSGMVQKPALRGLLSSLK) directs the protein to the mitochondrion. Residues His93, Tyr119, Arg120, Ala158, Gly166, Val168, Asp197, Gly198, Ala199, Asn226, and Tyr228 each contribute to the pyruvate site. The thiamine diphosphate site is built by Tyr119 and Arg120. Residues Gly166, Val168, Asp197, Gly198, Ala199, and Asn226 each contribute to the thiamine diphosphate site. Asp197 is a binding site for Mg(2+). Residues Asn226 and Tyr228 each contribute to the Mg(2+) site. His293 is a thiamine diphosphate binding site. Phosphoserine is present on residues Ser294 and Ser296. The residue at position 301 (Ser301) is a Phosphoserine; by PDK3.

In terms of assembly, heterotetramer of two PDHA2 and two PDHB subunits. The heterotetramer interacts with DLAT, and is part of the multimeric pyruvate dehydrogenase complex that contains multiple copies of pyruvate dehydrogenase (E1), dihydrolipoamide acetyltransferase (DLAT, E2) and lipoamide dehydrogenase (DLD, E3). These subunits are bound to an inner core composed of about 48 DLAT and 12 PDHX molecules. Requires thiamine diphosphate as cofactor. Mg(2+) serves as cofactor. Testis.

It localises to the mitochondrion matrix. The catalysed reaction is N(6)-[(R)-lipoyl]-L-lysyl-[protein] + pyruvate + H(+) = N(6)-[(R)-S(8)-acetyldihydrolipoyl]-L-lysyl-[protein] + CO2. Pyruvate dehydrogenase activity is inhibited by phosphorylation of PDHA2; it is reactivated by dephosphorylation. In terms of biological role, the pyruvate dehydrogenase complex catalyzes the overall conversion of pyruvate to acetyl-CoA and CO(2), and thereby links the glycolytic pathway to the tricarboxylic cycle. The chain is Pyruvate dehydrogenase E1 component subunit alpha, testis-specific form, mitochondrial (Pdha2) from Rattus norvegicus (Rat).